Consider the following 1112-residue polypeptide: Nucleoporin NIC96 (1112 aa).

Disordered regions lie at residues 1-74 (MSLI…GTST), 101-136 (TTQP…QAAP), and 303-350 (RDSS…MSIL). The segment covering 12–29 (PSSTKASLFSSPTTSANP) has biased composition (polar residues). The segment covering 39–74 (GGSSLFAPKTAGSTTTSTTQPTSTTGLGTSLFGTST) has biased composition (low complexity). Over residues 101–118 (TTQPGLGASSLTTAATSN) the composition is skewed to polar residues. A coiled-coil region spans residues 113–135 (TAATSNQQAQQQQQQRQQHQQAA). Low complexity-rich tracts occupy residues 119–135 (QQAQ…QQAA) and 310–319 (TTTAQPTATP). A coiled-coil region spans residues 394-415 (FLREKQAKLAEKIREFNDARQR).

The protein belongs to the nucleoporin interacting component (NIC) family. In terms of assembly, component of the nuclear pore complex (NPC). NPC constitutes the exclusive means of nucleocytoplasmic transport. NPCs allow the passive diffusion of ions and small molecules and the active, nuclear transport receptor-mediated bidirectional transport of macromolecules such as proteins, RNAs, ribonucleoparticles (RNPs), and ribosomal subunits across the nuclear envelope. Due to its 8-fold rotational symmetry, all subunits are present with 8 copies or multiples thereof. Part of a tetrameric NUP192-NUP170-NIC96-NUP53 or NUP188-NUP170-NIC96-NUP53 module.

It is found in the nucleus. The protein localises to the nuclear pore complex. The protein resides in the nucleus membrane. Functions as a component of the nuclear pore complex (NPC). NPC components, collectively referred to as nucleoporins (NUPs), can play the role of both NPC structural components and of docking or interaction partners for transiently associated nuclear transport factors. NIC96, which is localized to the core of the NPC and the distal ring of the nuclear basket, is required for de novo assembly of NPCs. The polypeptide is Nucleoporin NIC96 (NIC96) (Chaetomium thermophilum (strain DSM 1495 / CBS 144.50 / IMI 039719) (Thermochaetoides thermophila)).